The primary structure comprises 1581 residues: Calmodulin-regulated spectrin-associated protein 1 (1581 aa).

A Calponin-homology (CH) domain is found at 215 to 330 (ESPAHQKVRY…FIAELFWWFE (116 aa)). Phosphoserine is present on residues Ser-216, Ser-370, Ser-374, and Ser-415. The segment at 351–399 (VLQQKSSRPPVPISNATKRSFLGSPAAMSPADQPPSTQPLAEGSHRYHL) is disordered. The disordered stretch occupies residues 424 to 470 (RQKQQKVSQTEEIPDQRHRSNSLTRVDGQPRGAIGAWPDKKNRPVSQ). Thr-511 carries the post-translational modification Phosphothreonine. Phosphoserine is present on residues Ser-550, Ser-553, Ser-560, Ser-572, and Ser-586. Over residues 603–617 (KQITTKEDERGEGRP) the composition is skewed to basic and acidic residues. A disordered region spans residues 603–649 (KQITTKEDERGEGRPRTIMAKRPSEGSQPMVRKKVSGGHGSRDLNRT). A phosphoserine mark is found at Ser-626, Ser-718, Ser-724, Ser-734, and Ser-736. Positions 765 to 785 (ESAKLQEDMKVKEHEDKDDAS) are enriched in basic and acidic residues. 2 disordered regions span residues 765-803 (ESAK…SMSM) and 821-866 (LNSC…SKDP). Low complexity-rich tracts occupy residues 792 to 803 (LSTTSQLSSMSM) and 826 to 837 (TKSSTSSSQKTT). Residues 853-865 (QKREQSPGRHSKD) show a composition bias toward basic and acidic residues. Residues 867–888 (ASLLASELVQLHMQLEEKRRAI) are sufficient for interaction with SPTBN1. 2 coiled-coil regions span residues 869 to 905 (LLAS…QRLK) and 1005 to 1037 (DVNE…QEQL). A sufficient for interaction with calmodulin region spans residues 899-918 (SARQRLKLGKAAFLHVVKKG). Disordered stretches follow at residues 1064–1143 (FVEP…ELPE), 1225–1251 (PDED…PGVG), 1288–1315 (QLEA…EEEK), and 1332–1428 (QALE…DWET). Ser-1069 is subject to Phosphoserine. Positions 1092–1103 (RPAELKVPKDRQ) are enriched in basic and acidic residues. Polar residues predominate over residues 1104-1132 (QGCSRSKTPTPSVETLPQSRSLPPSTHPR). Residue Ser-1133 is modified to Phosphoserine. The span at 1225–1237 (PDEDGEVVGHESS) shows a compositional bias: basic and acidic residues. Positions 1265 to 1336 (AKKRAAFLLK…RRKQQQALEE (72 aa)) form a coiled coil. Positions 1342 to 1353 (PKSKPKKPRPKS) are enriched in basic residues. Polar residues predominate over residues 1361–1372 (SDSGTKCSSTHN). Low complexity predominate over residues 1373–1390 (LSQTHSGSSLSLASAATT). Phosphoserine occurs at positions 1378 and 1407. One can recognise a CKK domain in the interval 1443–1576 (GPKLFKEPSS…QPKRPTVPKK (134 aa)). Tyr-1516 bears the Phosphotyrosine mark.

This sequence belongs to the CAMSAP1 family. Interacts with spectrin via SPTBN1; the interaction is direct. Interacts with calmodulin; calcium-dependent it prevents interaction with spectrin. In terms of tissue distribution, expressed in the central nervous system.

The protein localises to the cytoplasm. The protein resides in the cytoskeleton. Key microtubule-organizing protein that specifically binds the minus-end of non-centrosomal microtubules and regulates their dynamics and organization. Specifically recognizes growing microtubule minus-ends and stabilizes microtubules. Acts on free microtubule minus-ends that are not capped by microtubule-nucleating proteins or other factors and protects microtubule minus-ends from depolymerization. In contrast to CAMSAP2 and CAMSAP3, tracks along the growing tips of minus-end microtubules without significantly affecting the polymerization rate: binds at the very tip of the microtubules minus-end and acts as a minus-end tracking protein (-TIP) that dissociates from microtubules after allowing tubulin incorporation. Through interaction with spectrin may regulate neurite outgrowth. The sequence is that of Calmodulin-regulated spectrin-associated protein 1 (Camsap1) from Mus musculus (Mouse).